Here is a 397-residue protein sequence, read N- to C-terminus: Argininosuccinate synthase (397 aa).

7-15 is a binding site for ATP; sequence LYSGGLDTS. Residue Tyr-83 coordinates L-citrulline. Gly-113 contacts ATP. Residues Thr-115, Asn-119, and Asp-120 each contribute to the L-aspartate site. Residue Asn-119 participates in L-citrulline binding. L-citrulline is bound by residues Arg-123, Ser-169, Ser-178, Glu-253, and Tyr-265.

This sequence belongs to the argininosuccinate synthase family. Type 1 subfamily. As to quaternary structure, homotetramer.

It localises to the cytoplasm. The catalysed reaction is L-citrulline + L-aspartate + ATP = 2-(N(omega)-L-arginino)succinate + AMP + diphosphate + H(+). It functions in the pathway amino-acid biosynthesis; L-arginine biosynthesis; L-arginine from L-ornithine and carbamoyl phosphate: step 2/3. In Thermoplasma volcanium (strain ATCC 51530 / DSM 4299 / JCM 9571 / NBRC 15438 / GSS1), this protein is Argininosuccinate synthase.